The primary structure comprises 614 residues: Glutamine--fructose-6-phosphate aminotransferase [isomerizing] (614 aa).

The Nucleophile; for GATase activity role is filled by C2. One can recognise a Glutamine amidotransferase type-2 domain in the interval 2 to 223 (CGIIGYIGRR…DGEMAVVTRD (222 aa)). 2 consecutive SIS domains span residues 292 to 431 (YLDR…GRTI) and 463 to 604 (IAVK…VDRP). K609 (for Fru-6P isomerization activity) is an active-site residue.

In terms of assembly, homodimer.

Its subcellular location is the cytoplasm. The enzyme catalyses D-fructose 6-phosphate + L-glutamine = D-glucosamine 6-phosphate + L-glutamate. In terms of biological role, catalyzes the first step in hexosamine metabolism, converting fructose-6P into glucosamine-6P using glutamine as a nitrogen source. This Chlorobaculum tepidum (strain ATCC 49652 / DSM 12025 / NBRC 103806 / TLS) (Chlorobium tepidum) protein is Glutamine--fructose-6-phosphate aminotransferase [isomerizing].